The sequence spans 98 residues: Large ribosomal subunit protein uL23 (98 aa).

It belongs to the universal ribosomal protein uL23 family. Part of the 50S ribosomal subunit. Contacts protein L29, and trigger factor when it is bound to the ribosome.

Its function is as follows. One of the early assembly proteins it binds 23S rRNA. One of the proteins that surrounds the polypeptide exit tunnel on the outside of the ribosome. Forms the main docking site for trigger factor binding to the ribosome. The chain is Large ribosomal subunit protein uL23 from Streptococcus equi subsp. equi (strain 4047).